The chain runs to 428 residues: Glutamine synthetase leaf isozyme, chloroplastic (428 aa).

A chloroplast-targeting transit peptide spans 1–49; it reads MAQILAPSIQCQTRITKTSPLATPISSKMWSSLVMKQNKKVARSAKFRV. The GS beta-grasp domain occupies 75-155; it reads IIAEYIWIGG…VICDAYTPQG (81 aa). One can recognise a GS catalytic domain in the interval 159-428; sequence PTNKRHKAAE…LAAQKIALKV (270 aa).

This sequence belongs to the glutamine synthetase family. As to quaternary structure, homooctamer.

It is found in the plastid. Its subcellular location is the chloroplast. It carries out the reaction L-glutamate + NH4(+) + ATP = L-glutamine + ADP + phosphate + H(+). Its function is as follows. The light-modulated chloroplast enzyme, encoded by a nuclear gene and expressed primarily in leaves, is responsible for the reassimilation of the ammonia generated by photorespiration. The polypeptide is Glutamine synthetase leaf isozyme, chloroplastic (GS2) (Medicago sativa (Alfalfa)).